A 248-amino-acid polypeptide reads, in one-letter code: Adenosylcobinamide-GDP ribazoletransferase (248 aa).

Helical transmembrane passes span 3–23 (ELKALILSIQFMTGIPIPINI), 35–55 (SYFPVVGLLIGGILYIAYLLL), 63–83 (IVMTFLVAFSYILTRGMHIDG), 109–129 (LGTNGVLALVFMVILKILFLS), 135–155 (LLFSALLVSPVIARLSVVFSI), 180–199 (FVIALLISTIAGYFVMPLKD), 200–219 (LALLYVISLSFTCLISKYIS), and 228–248 (DTLGAVNEFVELIAFIYFSIL).

Belongs to the CobS family. Requires Mg(2+) as cofactor.

Its subcellular location is the cell membrane. The catalysed reaction is alpha-ribazole + adenosylcob(III)inamide-GDP = adenosylcob(III)alamin + GMP + H(+). The enzyme catalyses alpha-ribazole 5'-phosphate + adenosylcob(III)inamide-GDP = adenosylcob(III)alamin 5'-phosphate + GMP + H(+). It participates in cofactor biosynthesis; adenosylcobalamin biosynthesis; adenosylcobalamin from cob(II)yrinate a,c-diamide: step 7/7. Functionally, joins adenosylcobinamide-GDP and alpha-ribazole to generate adenosylcobalamin (Ado-cobalamin). Also synthesizes adenosylcobalamin 5'-phosphate from adenosylcobinamide-GDP and alpha-ribazole 5'-phosphate. The protein is Adenosylcobinamide-GDP ribazoletransferase of Caldanaerobacter subterraneus subsp. tengcongensis (strain DSM 15242 / JCM 11007 / NBRC 100824 / MB4) (Thermoanaerobacter tengcongensis).